The primary structure comprises 48 residues: Cuticle protein 10 (48 aa).

The polypeptide is Cuticle protein 10 (Limulus polyphemus (Atlantic horseshoe crab)).